We begin with the raw amino-acid sequence, 273 residues long: ATP synthase subunit delta (273 aa).

The protein belongs to the ATPase delta chain family. In terms of assembly, F-type ATPases have 2 components, F(1) - the catalytic core - and F(0) - the membrane proton channel. F(1) has five subunits: alpha(3), beta(3), gamma(1), delta(1), epsilon(1). F(0) has three main subunits: a(1), b(2) and c(10-14). The alpha and beta chains form an alternating ring which encloses part of the gamma chain. F(1) is attached to F(0) by a central stalk formed by the gamma and epsilon chains, while a peripheral stalk is formed by the delta and b chains.

The protein resides in the cell membrane. In terms of biological role, f(1)F(0) ATP synthase produces ATP from ADP in the presence of a proton or sodium gradient. F-type ATPases consist of two structural domains, F(1) containing the extramembraneous catalytic core and F(0) containing the membrane proton channel, linked together by a central stalk and a peripheral stalk. During catalysis, ATP synthesis in the catalytic domain of F(1) is coupled via a rotary mechanism of the central stalk subunits to proton translocation. This protein is part of the stalk that links CF(0) to CF(1). It either transmits conformational changes from CF(0) to CF(1) or is implicated in proton conduction. This chain is ATP synthase subunit delta, found in Streptomyces avermitilis (strain ATCC 31267 / DSM 46492 / JCM 5070 / NBRC 14893 / NCIMB 12804 / NRRL 8165 / MA-4680).